The primary structure comprises 218 residues: Peptide methionine sulfoxide reductase MsrA (218 aa).

Residue cysteine 57 is part of the active site.

The protein belongs to the MsrA Met sulfoxide reductase family.

The catalysed reaction is L-methionyl-[protein] + [thioredoxin]-disulfide + H2O = L-methionyl-(S)-S-oxide-[protein] + [thioredoxin]-dithiol. It carries out the reaction [thioredoxin]-disulfide + L-methionine + H2O = L-methionine (S)-S-oxide + [thioredoxin]-dithiol. Has an important function as a repair enzyme for proteins that have been inactivated by oxidation. Catalyzes the reversible oxidation-reduction of methionine sulfoxide in proteins to methionine. This chain is Peptide methionine sulfoxide reductase MsrA, found in Brucella suis biovar 1 (strain 1330).